Here is a 192-residue protein sequence, read N- to C-terminus: MIYQKQRNTAETQLNISISDDQSPSHINTGVGFLNHMLTLFTFHSGLSLNIEAQGDIDVDDHHVTEDIGIVIGQLLLEMIKDKKHFVRYGTMYIPMDETLARVVVDISGRPYLSFNATLSKEKVGTFDTELVEEFFRAVVINARLTTHIDLIRGGNTHHEIEAIFKAFSRALGIALTATDDQRVPSSKGVIE.

This sequence belongs to the imidazoleglycerol-phosphate dehydratase family.

It is found in the cytoplasm. It catalyses the reaction D-erythro-1-(imidazol-4-yl)glycerol 3-phosphate = 3-(imidazol-4-yl)-2-oxopropyl phosphate + H2O. Its pathway is amino-acid biosynthesis; L-histidine biosynthesis; L-histidine from 5-phospho-alpha-D-ribose 1-diphosphate: step 6/9. This Staphylococcus aureus (strain bovine RF122 / ET3-1) protein is Imidazoleglycerol-phosphate dehydratase.